We begin with the raw amino-acid sequence, 27 residues long: Metallothionein-like protein CAP5 (27 aa).

The span at 1 to 18 shows a compositional bias: low complexity; sequence MAPCSCKSCGTSCAGSCT. Residues 1-27 are disordered; that stretch reads MAPCSCKSCGTSCAGSCTSCSCGSCSH. Cys4, Cys6, Cys9, Cys13, Cys20, Cys22, and Cys25 together coordinate Cu(+).

Belongs to the metallothionein superfamily. Type 8 family.

The polypeptide is Metallothionein-like protein CAP5 (CAP5) (Colletotrichum gloeosporioides (Anthracnose fungus)).